The following is a 425-amino-acid chain: Glutamyl-tRNA reductase (425 aa).

Substrate-binding positions include 49–52, S109, 114–116, and Q120; these read TCNR and EGQ. C50 functions as the Nucleophile in the catalytic mechanism. 189–194 contributes to the NADP(+) binding site; sequence GAGKMS.

The protein belongs to the glutamyl-tRNA reductase family. As to quaternary structure, homodimer.

The enzyme catalyses (S)-4-amino-5-oxopentanoate + tRNA(Glu) + NADP(+) = L-glutamyl-tRNA(Glu) + NADPH + H(+). The protein operates within porphyrin-containing compound metabolism; protoporphyrin-IX biosynthesis; 5-aminolevulinate from L-glutamyl-tRNA(Glu): step 1/2. It participates in porphyrin-containing compound metabolism; chlorophyll biosynthesis. Its function is as follows. Catalyzes the NADPH-dependent reduction of glutamyl-tRNA(Glu) to glutamate 1-semialdehyde (GSA). In Picosynechococcus sp. (strain ATCC 27264 / PCC 7002 / PR-6) (Agmenellum quadruplicatum), this protein is Glutamyl-tRNA reductase.